We begin with the raw amino-acid sequence, 695 residues long: Calcium-binding acidic-repeat protein (695 aa).

Residues 1 to 20 (MSHLWCWLFLVLCLACLVLS) constitute a signal peptide (or 23). TSP type-3 repeat units follow at residues 24-38 (KDSD…DEIN), 47-56 (ADSDQDGLTD), 70-82 (KDTD…DGVE), 184-196 (GDSD…DGAE), 202-214 (KDSD…DEEE), and 248-260 (GDSD…DGAE). Residues 45–695 (YNADSDQDGL…TDPWRSDHSV (651 aa)) form a disordered region. Positions 59–70 (EVNRHQTHPQDK) are enriched in basic and acidic residues. 3 stretches are compositionally biased toward acidic residues: residues 271-283 (ADSD…DGEE), 291-306 (PEDP…DGDE), and 313-324 (DPEEDDSDEDGV). TSP type-3 repeat units follow at residues 294-308 (PDSD…DEVN), 317-329 (DDSD…DGAE), 340-352 (EDSD…DGAE), 363-375 (EDSD…DGAE), 379-393 (TDSD…DEVA), 402-414 (ADSD…DGAE), 425-437 (KDTD…DGVE), 470-482 (EDTD…DGAE), 493-505 (ADTD…DGAE), 516-528 (ADSD…DGAE), 539-551 (GDSD…DAAE), 555-569 (KDSD…DEVR), 600-609 (RDTDGDGVAD), 623-635 (ADTD…DGAE), and 646-658 (ADSD…DGAE). Acidic residues-rich tracts occupy residues 361 to 370 (NDEDSDDDGI) and 381 to 392 (SDGDGLPDEDEV). 2 stretches are compositionally biased toward acidic residues: residues 467–477 (PNDEDTDDDGL) and 491–500 (EDADTDDDGL). Positions 537–546 (NDGDSDDDGV) are enriched in acidic residues. Positions 589–603 (EILKHKTDPRNRDTD) are enriched in basic and acidic residues. Residues 665–679 (NAKDGDSDDDGKADG) are compositionally biased toward basic and acidic residues.

The protein resides in the secreted. The protein localises to the endoplasmic reticulum. Functionally, may function as a calcium-binding protein. The chain is Calcium-binding acidic-repeat protein from Euglena gracilis.